Here is a 137-residue protein sequence, read N- to C-terminus: Large ribosomal subunit protein uL16 (137 aa).

It belongs to the universal ribosomal protein uL16 family. Part of the 50S ribosomal subunit.

Binds 23S rRNA and is also seen to make contacts with the A and possibly P site tRNAs. This is Large ribosomal subunit protein uL16 from Ruegeria sp. (strain TM1040) (Silicibacter sp.).